The following is a 543-amino-acid chain: Putative fatty acyl-CoA reductase CG8303 (543 aa).

The segment at 1–29 (MAVITEHGGTTSSPPENNNSIGNGKHRVN) is disordered. Positions 8–22 (GGTTSSPPENNNSIG) are enriched in polar residues. The next 3 membrane-spanning stretches (helical) occupy residues 386 to 406 (LFFY…EKLF), 500 to 520 (VFNV…YFAL), and 522 to 542 (LTLG…FLVW).

This sequence belongs to the fatty acyl-CoA reductase family.

The protein localises to the membrane. It carries out the reaction a long-chain fatty acyl-CoA + 2 NADPH + 2 H(+) = a long-chain primary fatty alcohol + 2 NADP(+) + CoA. The catalysed reaction is hexadecanoyl-CoA + 2 NADPH + 2 H(+) = hexadecan-1-ol + 2 NADP(+) + CoA. The enzyme catalyses octadecanoyl-CoA + 2 NADPH + 2 H(+) = octadecan-1-ol + 2 NADP(+) + CoA. Its function is as follows. Catalyzes the reduction of C16 or C18 fatty acyl-CoA to fatty alcohols. The polypeptide is Putative fatty acyl-CoA reductase CG8303 (Drosophila melanogaster (Fruit fly)).